The primary structure comprises 171 residues: Nicotinamide-nucleotide adenylyltransferase (171 aa).

The protein belongs to the archaeal NMN adenylyltransferase family.

It is found in the cytoplasm. The catalysed reaction is beta-nicotinamide D-ribonucleotide + ATP + H(+) = diphosphate + NAD(+). Its pathway is cofactor biosynthesis; NAD(+) biosynthesis; NAD(+) from nicotinamide D-ribonucleotide: step 1/1. The polypeptide is Nicotinamide-nucleotide adenylyltransferase (Methanococcus maripaludis (strain C5 / ATCC BAA-1333)).